Here is a 224-residue protein sequence, read N- to C-terminus: Superoxide dismutase [Mn], mitochondrial (224 aa).

A mitochondrion-targeting transit peptide spans 1-20; that stretch reads MLLARAFARRSLRAGLWCRQ. 4 residues coordinate Mn(2+): H46, H94, D177, and H181.

It belongs to the iron/manganese superoxide dismutase family. Homotetramer. It depends on Mn(2+) as a cofactor.

The protein localises to the mitochondrion matrix. It catalyses the reaction 2 superoxide + 2 H(+) = H2O2 + O2. Its function is as follows. Destroys superoxide anion radicals which are normally produced within the cells and which are toxic to biological systems. The polypeptide is Superoxide dismutase [Mn], mitochondrial (Charybdis feriata (Crucifix crab)).